A 126-amino-acid chain; its full sequence is Fluoride-specific ion channel FluC (126 aa).

The next 4 membrane-spanning stretches (helical) occupy residues 2–22 (LTFAPLNFLAIGVGATLGAWL), 37–57 (WGTLTANLVGGYLIGVMVALI), 65–85 (AWIRLAAVTGFLGGLTTFSTF), and 101–121 (AAAYAGASLAGSLAMTGLATV). Glycine 77 and threonine 80 together coordinate Na(+).

This sequence belongs to the fluoride channel Fluc/FEX (TC 1.A.43) family.

Its subcellular location is the cell inner membrane. It carries out the reaction fluoride(in) = fluoride(out). With respect to regulation, na(+) is not transported, but it plays an essential structural role and its presence is essential for fluoride channel function. Fluoride-specific ion channel. Important for reducing fluoride concentration in the cell, thus reducing its toxicity. This chain is Fluoride-specific ion channel FluC, found in Bordetella parapertussis (strain 12822 / ATCC BAA-587 / NCTC 13253).